The following is a 207-amino-acid chain: uncharacterized protein (207 aa).

Residues Ser119 and His160 each act as charge relay system in the active site.

The protein belongs to the peptidase S51 family.

This is an uncharacterized protein from Pasteurella multocida (strain Pm70).